Consider the following 182-residue polypeptide: Adenine phosphoribosyltransferase (182 aa).

This sequence belongs to the purine/pyrimidine phosphoribosyltransferase family. Homodimer.

The protein resides in the cytoplasm. The enzyme catalyses AMP + diphosphate = 5-phospho-alpha-D-ribose 1-diphosphate + adenine. The protein operates within purine metabolism; AMP biosynthesis via salvage pathway; AMP from adenine: step 1/1. Catalyzes a salvage reaction resulting in the formation of AMP, that is energically less costly than de novo synthesis. This Ectopseudomonas mendocina (strain ymp) (Pseudomonas mendocina) protein is Adenine phosphoribosyltransferase.